The sequence spans 121 residues: UPF0344 protein BCA_1194 (121 aa).

Helical transmembrane passes span 6 to 26 (ITAW…YSAG), 38 to 58 (LMYI…MKTA), 65 to 85 (WYGL…MVLV), and 92 to 112 (ATGA…YLGL).

The protein belongs to the UPF0344 family.

It is found in the cell membrane. The protein is UPF0344 protein BCA_1194 of Bacillus cereus (strain 03BB102).